The following is a 254-amino-acid chain: 5-oxoprolinase subunit A (254 aa).

This sequence belongs to the LamB/PxpA family. Forms a complex composed of PxpA, PxpB and PxpC.

It catalyses the reaction 5-oxo-L-proline + ATP + 2 H2O = L-glutamate + ADP + phosphate + H(+). In terms of biological role, catalyzes the cleavage of 5-oxoproline to form L-glutamate coupled to the hydrolysis of ATP to ADP and inorganic phosphate. The polypeptide is 5-oxoprolinase subunit A (Burkholderia ambifaria (strain MC40-6)).